Here is a 78-residue protein sequence, read N- to C-terminus: Small ribosomal subunit protein bS18 (78 aa).

Belongs to the bacterial ribosomal protein bS18 family. In terms of assembly, part of the 30S ribosomal subunit. Forms a tight heterodimer with protein bS6.

In terms of biological role, binds as a heterodimer with protein bS6 to the central domain of the 16S rRNA, where it helps stabilize the platform of the 30S subunit. The sequence is that of Small ribosomal subunit protein bS18 from Pediococcus pentosaceus (strain ATCC 25745 / CCUG 21536 / LMG 10740 / 183-1w).